The primary structure comprises 444 residues: Probable galactarate/D-glucarate transporter GarP (444 aa).

Residues 1–11 (MILDTVDEKKK) lie on the Cytoplasmic side of the membrane. The chain crosses the membrane as a helical span at residues 12-32 (GVHTRYLILLIIFIVTAVNYA). At 33 to 56 (DRATLSIAGTEVAKELQLSAVSMG) the chain is on the periplasmic side. Residues 57–77 (YIFSAFGWAYLLMQIPGGWLL) form a helical membrane-spanning segment. The Cytoplasmic portion of the chain corresponds to 78 to 89 (DKFGSKKVYTYS). 2 helical membrane-spanning segments follow: residues 90–110 (LFFW…PLAW) and 111–131 (AGIS…PSFP). At 132–157 (ANARIVAAWFPTKERGTASAIFNSAQ) the chain is on the cytoplasmic side. 2 helical membrane-spanning segments follow: residues 158 to 178 (YFSL…WGWE) and 179 to 199 (HVFT…IKLI). Residues 200-252 (HNPTDHPRMSAEELKFISENGAVVDMDHKKPGSAAASGPKLHYIKQLLSNRMM) lie on the Cytoplasmic side of the membrane. Residues 253–273 (LGVFFGQYFINTITWFFLTWF) form a helical membrane-spanning segment. The Periplasmic segment spans residues 274–288 (PIYLVQEKGMSILKV). The helical transmembrane segment at 289–309 (GLVASIPALCGFAGGVLGGVF) threads the bilayer. The Cytoplasmic segment spans residues 310 to 319 (SDYLIKRGLS). Residues 320–340 (LTLARKLPIVLGMLLASTIIL) traverse the membrane as a helical segment. Over 341–350 (CNYTNNTTLV) the chain is Periplasmic. A helical transmembrane segment spans residues 351–371 (VMLMALAFFGKGFGALGWPVI). Residues 372 to 385 (SDTAPKEIVGLCGG) are Cytoplasmic-facing. A helical membrane pass occupies residues 386–406 (VFNVFGNVASIVTPLVIGYLV). Topologically, residues 407-413 (SELHSFN) are periplasmic. A helical transmembrane segment spans residues 414 to 434 (AALVFVGCSALMAMVCYLFVV). Residues 435–444 (GDIKRMELQK) lie on the Cytoplasmic side of the membrane.

It belongs to the major facilitator superfamily. Phthalate permease family.

It is found in the cell inner membrane. The enzyme catalyses galactarate(in) + H(+)(in) = galactarate(out) + H(+)(out). It catalyses the reaction D-glucarate(in) + H(+)(in) = D-glucarate(out) + H(+)(out). It carries out the reaction (R)-glycerate(in) + H(+)(in) = (R)-glycerate(out) + H(+)(out). Its function is as follows. Probably involved in the uptake of galactarate and/or D-glucarate. May also transport D-glycerate. The chain is Probable galactarate/D-glucarate transporter GarP from Escherichia coli (strain K12).